A 393-amino-acid polypeptide reads, in one-letter code: tRNA(Met) cytidine acetate ligase (393 aa).

3 residues coordinate ATP: G81, N142, and R167.

It belongs to the TmcAL family.

The protein resides in the cytoplasm. The catalysed reaction is cytidine(34) in elongator tRNA(Met) + acetate + ATP = N(4)-acetylcytidine(34) in elongator tRNA(Met) + AMP + diphosphate. In terms of biological role, catalyzes the formation of N(4)-acetylcytidine (ac(4)C) at the wobble position of elongator tRNA(Met), using acetate and ATP as substrates. First activates an acetate ion to form acetyladenylate (Ac-AMP) and then transfers the acetyl group to tRNA to form ac(4)C34. The chain is tRNA(Met) cytidine acetate ligase from Bacillus thuringiensis subsp. konkukian (strain 97-27).